The following is a 591-amino-acid chain: Fanconi anemia group C protein homolog (591 aa).

In terms of assembly, belongs to the multisubunit FA complex composed of FANCA, FANCB, FANCC, FANCE, FANCF, FANCG, FANCL/PHF9 and FANCM. This complex may also include HSP70. Interacts with ZBTB32. Upon IFNG induction, interacts with STAT1. Interacts with CDK1. Interacts with EIF2AK2. As to expression, ubiquitous.

The protein localises to the nucleus. Its subcellular location is the cytoplasm. DNA repair protein that may operate in a postreplication repair or a cell cycle checkpoint function. May be implicated in interstrand DNA cross-link repair and in the maintenance of normal chromosome stability. Upon IFNG induction, may facilitate STAT1 activation by recruiting STAT1 to IFNGR1. The sequence is that of Fanconi anemia group C protein homolog (Fancc) from Mus musculus (Mouse).